Here is a 453-residue protein sequence, read N- to C-terminus: GTPase Der (453 aa).

EngA-type G domains lie at 3 to 167 and 187 to 360; these read PIIV…ISEK and IKVA…EDSK. GTP-binding positions include 9 to 16, 57 to 61, 119 to 122, 193 to 200, 240 to 244, and 305 to 308; these read GRTNVGKS, DTAGL, NKID, GRPNVGKS, DTAGA, and NKCD. The region spanning 361–445 is the KH-like domain; it reads RKISTSTLIR…PIQIQFKDNE (85 aa).

It belongs to the TRAFAC class TrmE-Era-EngA-EngB-Septin-like GTPase superfamily. EngA (Der) GTPase family. Associates with the 50S ribosomal subunit.

In terms of biological role, GTPase that plays an essential role in the late steps of ribosome biogenesis. The polypeptide is GTPase Der (Buchnera aphidicola subsp. Acyrthosiphon pisum (strain Tuc7)).